Consider the following 327-residue polypeptide: Glycerol-3-phosphate dehydrogenase [NAD(P)+] (327 aa).

NADPH contacts are provided by tryptophan 11, histidine 30, and lysine 103. Sn-glycerol 3-phosphate-binding residues include lysine 103, glycine 131, and serine 133. NADPH is bound at residue alanine 135. Positions 186, 243, 253, 254, and 255 each coordinate sn-glycerol 3-phosphate. Lysine 186 acts as the Proton acceptor in catalysis. Arginine 254 provides a ligand contact to NADPH. 2 residues coordinate NADPH: valine 281 and glutamate 283.

The protein belongs to the NAD-dependent glycerol-3-phosphate dehydrogenase family.

The protein localises to the cytoplasm. The enzyme catalyses sn-glycerol 3-phosphate + NAD(+) = dihydroxyacetone phosphate + NADH + H(+). The catalysed reaction is sn-glycerol 3-phosphate + NADP(+) = dihydroxyacetone phosphate + NADPH + H(+). Its pathway is membrane lipid metabolism; glycerophospholipid metabolism. Functionally, catalyzes the reduction of the glycolytic intermediate dihydroxyacetone phosphate (DHAP) to sn-glycerol 3-phosphate (G3P), the key precursor for phospholipid synthesis. This is Glycerol-3-phosphate dehydrogenase [NAD(P)+] from Wolbachia pipientis wMel.